The sequence spans 763 residues: MKTSPRRPLILKRRRLPLPVQNAPSETSEEEPKRSPAQQESNQAEASKEVAESNSCKFPAGIKIINHPTMPNTQVVAIPNNANIHSIITALTAKGKESGSSGPNKFILISCGGAPTQPPGLRPQTQTSYDAKRTEVTLETLGPKPAARDVNLPRPPGALCEQKRETCADGEAAGCTINNSLSNIQWLRKMSSDGLGSRSIKQEMEEKENCHLEQRQVKVEEPSRPSASWQNSVSERPPYSYMAMIQFAINSTERKRMTLKDIYTWIEDHFPYFKHIAKPGWKNSIRHNLSLHDMFVRETSANGKVSFWTIHPSANRYLTLDQVFKPLDPGSPQLPEHLESQQKRPNPELRRNMTIKTELPLGARRKMKPLLPRVSSYLVPIQFPVNQSLVLQPSVKVPLPLAASLMSSELARHSKRVRIAPKVLLAEEGIAPLSSAGPGKEEKLLFGEGFSPLLPVQTIKEEEIQPGEEMPHLARPIKVESPPLEEWPSPAPSFKEESSHSWEDSSQSPTPRPKKSYSGLRSPTRCVSEMLVIQHRERRERSRSRRKQHLLPPCVDEPELLFSEGPSTSRWAAELPFPADSSDPASQLSYSQEVGGPFKTPIKETLPISSTPSKSVLPRTPESWRLTPPAKVGGLDFSPVQTSQGASDPLPDPLGLMDLSTTPLQSAPPLESPQRLLSSEPLDLISVPFGNSSPSDIDVPKPGSPEPQVSGLAANRSLTEGLVLDTMNDSLSKILLDISFPGLDEDPLGPDNINWSQFIPELQ.

The segment at 1 to 53 (MKTSPRRPLILKRRRLPLPVQNAPSETSEEEPKRSPAQQESNQAEASKEVAES) is disordered. Residues 36–45 (PAQQESNQAE) are compositionally biased toward polar residues. Glycyl lysine isopeptide (Lys-Gly) (interchain with G-Cter in SUMO2) cross-links involve residues Lys-163, Lys-201, and Lys-325. A disordered region spans residues 198-232 (RSIKQEMEEKENCHLEQRQVKVEEPSRPSASWQNS). A compositionally biased stretch (basic and acidic residues) spans 200 to 223 (IKQEMEEKENCHLEQRQVKVEEPS). Residues 235-327 (ERPPYSYMAM…LTLDQVFKPL (93 aa)) constitute a DNA-binding region (fork-head). Residues 329–351 (PGSPQLPEHLESQQKRPNPELRR) are disordered. The residue at position 331 (Ser-331) is a Phosphoserine. Over residues 336–351 (EHLESQQKRPNPELRR) the composition is skewed to basic and acidic residues. Lys-356 participates in a covalent cross-link: Glycyl lysine isopeptide (Lys-Gly) (interchain with G-Cter in SUMO2). Residue Ser-376 is modified to Phosphoserine; by CHEK2. Glycyl lysine isopeptide (Lys-Gly) (interchain with G-Cter in SUMO2) cross-links involve residues Lys-422 and Lys-440. Positions 482–711 (PPLEEWPSPA…PGSPEPQVSG (230 aa)) are disordered. Ser-489 carries the phosphoserine; by GSK3 modification. Basic and acidic residues predominate over residues 494–503 (FKEESSHSWE). Ser-522 carries the post-translational modification Phosphoserine. The span at 583–592 (DPASQLSYSQ) shows a compositional bias: polar residues. Residue Thr-611 is modified to Phosphothreonine; by CDK1. Phosphothreonine is present on residues Thr-620, Thr-627, and Thr-662. A Phosphoserine; by CDK1 modification is found at Ser-693. Residues Ser-730 and Ser-739 each carry the phosphoserine; by PLK1 modification.

In terms of assembly, interacts with PINT87aa which is encoded by the circular form of the long non-coding RNA LINC-PINT; the interaction inhibits FOXM1-mediated transcription of PHB2. Phosphorylated in M (mitotic) phase. Phosphorylation by the checkpoint kinase CHEK2 in response to DNA damage increases the FOXM1 protein stability probably stimulating the transcription of genes involved in DNA repair. Phosphorylated by CDK1 in late S and G2 phases, creating docking sites for the POLO box domains of PLK1. Subsequently, PLK1 binds and phosphorylates FOXM1, leading to activation of transcriptional activity and subsequent enhanced expression of key mitotic regulators. Phosphorylated by GSK3B leading to ubiquitination and proteasomal degradation. Post-translationally, ubiquitinated in a FBXW7-dependent manner leading to proteasomal degradation. As to expression, expressed in thymus, testis, small intestine, colon followed by ovary. Appears to be expressed only in adult organs containing proliferating/cycling cells or in response to growth factors. Also expressed in epithelial cell lines derived from tumors. Not expressed in resting cells. Isoform 2 is highly expressed in testis.

The protein resides in the nucleus. Its function is as follows. Transcription factor regulating the expression of cell cycle genes essential for DNA replication and mitosis. Plays a role in the control of cell proliferation. Also plays a role in DNA break repair, participating in the DNA damage checkpoint response. Promotes transcription of PHB2. The sequence is that of Forkhead box protein M1 (FOXM1) from Homo sapiens (Human).